A 223-amino-acid chain; its full sequence is Endonuclease V (223 aa).

Residues aspartate 35 and aspartate 103 each contribute to the Mg(2+) site.

It belongs to the endonuclease V family. The cofactor is Mg(2+).

Its subcellular location is the cytoplasm. The enzyme catalyses Endonucleolytic cleavage at apurinic or apyrimidinic sites to products with a 5'-phosphate.. DNA repair enzyme involved in the repair of deaminated bases. Selectively cleaves double-stranded DNA at the second phosphodiester bond 3' to a deoxyinosine leaving behind the intact lesion on the nicked DNA. The sequence is that of Endonuclease V from Shigella dysenteriae serotype 1 (strain Sd197).